The sequence spans 418 residues: AP-3 complex subunit mu-2 (418 aa).

Residues 176–417 (NNEAYFDVIE…MTKAGKFQVR (242 aa)) enclose the MHD domain.

The protein belongs to the adaptor complexes medium subunit family. In terms of assembly, AP-3 associates with the BLOC-1 complex. Adaptor protein complex 3 (AP-3) is a heterotetramer composed of two large adaptins (delta-type subunit AP3D1 and beta-type subunit AP3B1 or AP3B2), a medium adaptin (mu-type subunit AP3M1 or AP3M2) and a small adaptin (sigma-type subunit APS1 or AP3S2).

Its subcellular location is the golgi apparatus. It is found in the cytoplasmic vesicle membrane. Functionally, part of the AP-3 complex, an adaptor-related complex which is not clathrin-associated. The complex is associated with the Golgi region as well as more peripheral structures. It facilitates the budding of vesicles from the Golgi membrane and may be directly involved in trafficking to lysosomes. In concert with the BLOC-1 complex, AP-3 is required to target cargos into vesicles assembled at cell bodies for delivery into neurites and nerve terminals. The chain is AP-3 complex subunit mu-2 (AP3M2) from Homo sapiens (Human).